A 178-amino-acid chain; its full sequence is ATP synthase subunit b, chloroplastic (178 aa).

Residues 34 to 50 (LAILTGGIFYLGSNALS) traverse the membrane as a helical segment.

The protein belongs to the ATPase B chain family. F-type ATPases have 2 components, F(1) - the catalytic core - and F(0) - the membrane proton channel. F(1) has five subunits: alpha(3), beta(3), gamma(1), delta(1), epsilon(1). F(0) has four main subunits: a(1), b(1), b'(1) and c(10-14). The alpha and beta chains form an alternating ring which encloses part of the gamma chain. F(1) is attached to F(0) by a central stalk formed by the gamma and epsilon chains, while a peripheral stalk is formed by the delta, b and b' chains.

It localises to the plastid. It is found in the chloroplast thylakoid membrane. In terms of biological role, f(1)F(0) ATP synthase produces ATP from ADP in the presence of a proton or sodium gradient. F-type ATPases consist of two structural domains, F(1) containing the extramembraneous catalytic core and F(0) containing the membrane proton channel, linked together by a central stalk and a peripheral stalk. During catalysis, ATP synthesis in the catalytic domain of F(1) is coupled via a rotary mechanism of the central stalk subunits to proton translocation. Functionally, component of the F(0) channel, it forms part of the peripheral stalk, linking F(1) to F(0). This is ATP synthase subunit b, chloroplastic from Ochrosphaera neapolitana.